We begin with the raw amino-acid sequence, 291 residues long: Shikimate dehydrogenase (NADP(+)) (291 aa).

Shikimate contacts are provided by residues 23–25 and Thr-70; that span reads SFS. Lys-74 functions as the Proton acceptor in the catalytic mechanism. Residues Asn-95 and Asp-110 each coordinate shikimate. NADP(+) is bound by residues 135-139 and Leu-232; that span reads GAGGA. Tyr-234 is a binding site for shikimate. Residue Gly-255 coordinates NADP(+).

The protein belongs to the shikimate dehydrogenase family. Homodimer.

The enzyme catalyses shikimate + NADP(+) = 3-dehydroshikimate + NADPH + H(+). The protein operates within metabolic intermediate biosynthesis; chorismate biosynthesis; chorismate from D-erythrose 4-phosphate and phosphoenolpyruvate: step 4/7. In terms of biological role, involved in the biosynthesis of the chorismate, which leads to the biosynthesis of aromatic amino acids. Catalyzes the reversible NADPH linked reduction of 3-dehydroshikimate (DHSA) to yield shikimate (SA). This chain is Shikimate dehydrogenase (NADP(+)), found in Desulforamulus reducens (strain ATCC BAA-1160 / DSM 100696 / MI-1) (Desulfotomaculum reducens).